The chain runs to 141 residues: Single-stranded DNA-binding protein 2 (141 aa).

Positions 1-104 (MLNRTVLVGR…VVADSVQFLE (104 aa)) constitute an SSB domain. A disordered region spans residues 104–141 (EPKNNNQQQNNNYQQQRQTQTGNNPFDNNADSIEDLPF). Residues 107–127 (NNNQQQNNNYQQQRQTQTGNN) show a composition bias toward low complexity.

Homotetramer.

This is Single-stranded DNA-binding protein 2 (ssb-p) from Staphylococcus aureus (strain Mu50 / ATCC 700699).